A 378-amino-acid chain; its full sequence is MMKSIRFLASALALCLVDAYLVTPPGTPAPGAASACSAWVQASYGLTCDIIHRFYGMTAAEFEEWVSKCPAAQLYPLNYICTDSAKNPSVSQLGDGCTLISGLYYCVQVNYITQSPTWTPPTTTTRSTSSSAGNGVTTPTPTQTGMVSSCNRFYLVVSGDSCYDIAAAQGISLDNFYTWNPAVGSSCGGLWPDYYVCVGVISDGTTTTTTTTTTPTTTSTTTTTAGNGVTTPTPIQTGMVTNCNKFYQVVSGDGCYDIAAAAGIALNDFYTWNPAVGNTCAGLWPDYYVCVGIIGSSGTTTTKTTTTTTSGNGVATPTPTQSGMVSNCKKFYLVVSGDGCYDIAAAAGIALSDFYAWNPAVGDTCAGLWPNYYVCVGI.

An N-terminal signal peptide occupies residues 1–19 (MMKSIRFLASALALCLVDA). The span at 118–131 (WTPPTTTTRSTSSS) shows a compositional bias: low complexity. Positions 118 to 139 (WTPPTTTTRSTSSSAGNGVTTP) are disordered. Residues 152–198 (RFYLVVSGDSCYDIAAAQGISLDNFYTWNPAVGSSCGGLWPDYYVCV) enclose the LysM 1 domain. The segment at 208-230 (TTTTTTTPTTTSTTTTTAGNGVT) is disordered. 2 LysM domains span residues 245 to 291 (KFYQ…YVCV) and 330 to 376 (KFYL…YVCV).

Belongs to the secreted LysM effector family.

It is found in the secreted. The protein resides in the cell wall. It localises to the extracellular space. The protein localises to the extracellular matrix. Its function is as follows. Cell wall chitin of A.fumigatus recruits lung eosinophils during infection and ldpA might have a role in sequestration of chitin and act as triggers of host immunity to dampen host defense. The polypeptide is Secreted LysM effector ldpA (Aspergillus fumigatus (strain ATCC MYA-4609 / CBS 101355 / FGSC A1100 / Af293) (Neosartorya fumigata)).